A 277-amino-acid polypeptide reads, in one-letter code: MIWPFKTSTRKKIARIEVTGAIASGTRKAVLKALKTVEEKKYPALLVRIDSPGGTVVDSQEIYTKLKQLSEKIKVVASFGNISASGGVYIAMGCPHIMANSGTITGSIGVILRGNNLERLLEKVGVSFKVIKSGPYKDILSFDRELLPEEQSILQALIDDSYGQFVSTVAAGRNLAVEKVKEFADGRIFTGQQALELGLVDRLGTEEDARQWAATLAGLDPDKVELDTIEDPKPLVRRLTGGDSQLQTMADNLGLTESLKWCEFELSTSGQPLWLYR.

Catalysis depends on Ser85, which acts as the Nucleophile. Lys137 (proton donor/acceptor) is an active-site residue.

Belongs to the peptidase S49 family.

The protein is Putative protease slr0021 of Synechocystis sp. (strain ATCC 27184 / PCC 6803 / Kazusa).